The sequence spans 578 residues: Probable arginine--tRNA ligase, mitochondrial (578 aa).

The N-terminal 16 residues, M1 to V16, are a transit peptide targeting the mitochondrion. Residues S133 to N135, H144, Y322, D326, and Q350 contribute to the L-arginine site. A 'HIGH' region motif is present at residues S133–H144. Residue K568 is modified to N6-acetyllysine.

This sequence belongs to the class-I aminoacyl-tRNA synthetase family.

It localises to the mitochondrion membrane. It catalyses the reaction tRNA(Arg) + L-arginine + ATP = L-arginyl-tRNA(Arg) + AMP + diphosphate. Catalyzes the attachment of arginine to tRNA(Arg) in a two-step reaction: arginine is first activated by ATP to form Arg-AMP and then transferred to the acceptor end of tRNA(Arg). This chain is Probable arginine--tRNA ligase, mitochondrial (Rars2), found in Mus musculus (Mouse).